Consider the following 197-residue polypeptide: Large ribosomal subunit protein uL10 (197 aa).

The tract at residues 163–197 (GAPAAAEAPAAEESADSAAEAAAEAPAEAPAAEEN) is disordered.

This sequence belongs to the universal ribosomal protein uL10 family. Part of the ribosomal stalk of the 50S ribosomal subunit. The N-terminus interacts with L11 and the large rRNA to form the base of the stalk. The C-terminus forms an elongated spine to which L12 dimers bind in a sequential fashion forming a multimeric L10(L12)X complex.

In terms of biological role, forms part of the ribosomal stalk, playing a central role in the interaction of the ribosome with GTP-bound translation factors. This chain is Large ribosomal subunit protein uL10, found in Pseudarthrobacter chlorophenolicus (strain ATCC 700700 / DSM 12829 / CIP 107037 / JCM 12360 / KCTC 9906 / NCIMB 13794 / A6) (Arthrobacter chlorophenolicus).